Reading from the N-terminus, the 122-residue chain is Large ribosomal subunit protein uL14 (122 aa).

It belongs to the universal ribosomal protein uL14 family. Part of the 50S ribosomal subunit. Forms a cluster with proteins L3 and L19. In the 70S ribosome, L14 and L19 interact and together make contacts with the 16S rRNA in bridges B5 and B8.

In terms of biological role, binds to 23S rRNA. Forms part of two intersubunit bridges in the 70S ribosome. The protein is Large ribosomal subunit protein uL14 of Caulobacter sp. (strain K31).